A 361-amino-acid chain; its full sequence is S-adenosylmethionine:tRNA ribosyltransferase-isomerase (361 aa).

It belongs to the QueA family. In terms of assembly, monomer.

The protein resides in the cytoplasm. The enzyme catalyses 7-aminomethyl-7-carbaguanosine(34) in tRNA + S-adenosyl-L-methionine = epoxyqueuosine(34) in tRNA + adenine + L-methionine + 2 H(+). The protein operates within tRNA modification; tRNA-queuosine biosynthesis. Its function is as follows. Transfers and isomerizes the ribose moiety from AdoMet to the 7-aminomethyl group of 7-deazaguanine (preQ1-tRNA) to give epoxyqueuosine (oQ-tRNA). This Haemophilus ducreyi (strain 35000HP / ATCC 700724) protein is S-adenosylmethionine:tRNA ribosyltransferase-isomerase.